Here is a 485-residue protein sequence, read N- to C-terminus: Glycogen synthase (485 aa).

Residue K18 coordinates ADP-alpha-D-glucose.

Belongs to the glycosyltransferase 1 family. Bacterial/plant glycogen synthase subfamily.

It catalyses the reaction [(1-&gt;4)-alpha-D-glucosyl](n) + ADP-alpha-D-glucose = [(1-&gt;4)-alpha-D-glucosyl](n+1) + ADP + H(+). Its pathway is glycan biosynthesis; glycogen biosynthesis. Synthesizes alpha-1,4-glucan chains using ADP-glucose. This is Glycogen synthase from Dechloromonas aromatica (strain RCB).